The chain runs to 154 residues: Pro-corazonin (154 aa).

Positions 1 to 19 (MLRLLLLPLFLFTLSMCMG) are cleaved as a signal peptide. Residue Q20 is modified to Pyrrolidone carboxylic acid. At N30 the chain carries Asparagine amide. The propeptide occupies 70–154 (LERCLSQLQR…SAEPNVFGKH (85 aa)).

The protein belongs to the corazonin family. In terms of tissue distribution, expression is restricted to 24 neurons in the larval CNS (8 in the brain and 16 in the ventral nerve cord) and 12-16 neurons in the pars lateralis of the adult brain.

The protein localises to the secreted. Cardioactive peptide. Corazonin is probably involved in the physiological regulation of the heart beat. Clock (Clk) and cycle (cyc) proteins negatively regulate Crz transcription in a cell-specific manner. This chain is Pro-corazonin (Crz), found in Drosophila erecta (Fruit fly).